A 223-amino-acid polypeptide reads, in one-letter code: Phosphoribosylformylglycinamidine synthase subunit PurQ (223 aa).

Residues 4–223 (RIGVITFPGT…FQSVLSTLVS (220 aa)) enclose the Glutamine amidotransferase type-1 domain. Cys87 (nucleophile) is an active-site residue. Active-site residues include His195 and Glu197.

Part of the FGAM synthase complex composed of 1 PurL, 1 PurQ and 2 PurS subunits.

The protein localises to the cytoplasm. It catalyses the reaction N(2)-formyl-N(1)-(5-phospho-beta-D-ribosyl)glycinamide + L-glutamine + ATP + H2O = 2-formamido-N(1)-(5-O-phospho-beta-D-ribosyl)acetamidine + L-glutamate + ADP + phosphate + H(+). It carries out the reaction L-glutamine + H2O = L-glutamate + NH4(+). The protein operates within purine metabolism; IMP biosynthesis via de novo pathway; 5-amino-1-(5-phospho-D-ribosyl)imidazole from N(2)-formyl-N(1)-(5-phospho-D-ribosyl)glycinamide: step 1/2. Part of the phosphoribosylformylglycinamidine synthase complex involved in the purines biosynthetic pathway. Catalyzes the ATP-dependent conversion of formylglycinamide ribonucleotide (FGAR) and glutamine to yield formylglycinamidine ribonucleotide (FGAM) and glutamate. The FGAM synthase complex is composed of three subunits. PurQ produces an ammonia molecule by converting glutamine to glutamate. PurL transfers the ammonia molecule to FGAR to form FGAM in an ATP-dependent manner. PurS interacts with PurQ and PurL and is thought to assist in the transfer of the ammonia molecule from PurQ to PurL. This chain is Phosphoribosylformylglycinamidine synthase subunit PurQ, found in Corynebacterium jeikeium (strain K411).